A 149-amino-acid polypeptide reads, in one-letter code: Protein OPG200 (149 aa).

It belongs to the orthopoxvirus OPG200 family. Homodimers. Interacts with host IKBKB; this interaction inhibits host NF-kappa-B activation.

In terms of biological role, contributes to virulence by binding to the host IKBKB subunit of the IKK complex and preventing host NF-kappa-B activation in response to pro-inflammatory stimuli such as TNF-alpha or IL1B. Mechanistically, sterically hinders the direct contact between the kinase domains of IKBKB in the IKK complex containing IKBKB, CHUK/IKKA and NEMO. The protein is Protein OPG200 (OPG200) of Vaccinia virus (strain Western Reserve) (VACV).